Reading from the N-terminus, the 127-residue chain is uncharacterized protein (127 aa).

2 helical membrane-spanning segments follow: residues 48 to 68 (LYSL…PLSI) and 83 to 103 (VFLF…CLID).

It is found in the membrane. This is an uncharacterized protein from Saccharomyces cerevisiae (strain ATCC 204508 / S288c) (Baker's yeast).